The following is a 185-amino-acid chain: Transcription antitermination protein NusB (185 aa).

It belongs to the NusB family.

In terms of biological role, involved in transcription antitermination. Required for transcription of ribosomal RNA (rRNA) genes. Binds specifically to the boxA antiterminator sequence of the ribosomal RNA (rrn) operons. This is Transcription antitermination protein NusB from Rhodospirillum rubrum (strain ATCC 11170 / ATH 1.1.1 / DSM 467 / LMG 4362 / NCIMB 8255 / S1).